A 21-amino-acid polypeptide reads, in one-letter code: Large ribosomal subunit protein uL10 (21 aa).

The protein belongs to the universal ribosomal protein uL10 family. As to quaternary structure, part of the ribosomal stalk of the 50S ribosomal subunit. The N-terminus interacts with L11 and the large rRNA to form the base of the stalk. The C-terminus forms an elongated spine to which L12 dimers bind in a sequential fashion forming a multimeric L10(L12)X complex.

Functionally, forms part of the ribosomal stalk, playing a central role in the interaction of the ribosome with GTP-bound translation factors. The chain is Large ribosomal subunit protein uL10 (rplJ) from Proteus vulgaris.